The following is a 160-amino-acid chain: SsrA-binding protein (160 aa).

The protein belongs to the SmpB family.

The protein localises to the cytoplasm. Required for rescue of stalled ribosomes mediated by trans-translation. Binds to transfer-messenger RNA (tmRNA), required for stable association of tmRNA with ribosomes. tmRNA and SmpB together mimic tRNA shape, replacing the anticodon stem-loop with SmpB. tmRNA is encoded by the ssrA gene; the 2 termini fold to resemble tRNA(Ala) and it encodes a 'tag peptide', a short internal open reading frame. During trans-translation Ala-aminoacylated tmRNA acts like a tRNA, entering the A-site of stalled ribosomes, displacing the stalled mRNA. The ribosome then switches to translate the ORF on the tmRNA; the nascent peptide is terminated with the 'tag peptide' encoded by the tmRNA and targeted for degradation. The ribosome is freed to recommence translation, which seems to be the essential function of trans-translation. In Histophilus somni (strain 129Pt) (Haemophilus somnus), this protein is SsrA-binding protein.